The sequence spans 183 residues: Ribosome rescue factor SmrB (183 aa).

One can recognise a Smr domain in the interval 98–173 (LDLHGLTQLQ…GDAALLVLIE (76 aa)).

It belongs to the SmrB family. As to quaternary structure, associates with collided ribosomes, but not with correctly translating polysomes.

Functionally, acts as a ribosome collision sensor. Detects stalled/collided disomes (pairs of ribosomes where the leading ribosome is stalled and a second ribosome has collided with it) and endonucleolytically cleaves mRNA at the 5' boundary of the stalled ribosome. Stalled/collided disomes form a new interface (primarily via the 30S subunits) that binds SmrB. Cleaved mRNA becomes available for tmRNA ligation, leading to ribosomal subunit dissociation and rescue of stalled ribosomes. The protein is Ribosome rescue factor SmrB of Salmonella agona (strain SL483).